The following is a 306-amino-acid chain: Uracil phosphoribosyltransferase homolog (306 aa).

Disordered regions lie at residues M1–P28 and S58–A87. Composition is skewed to polar residues over residues C13–P28 and G70–N79. GTP contacts are provided by residues R130, R139, and E173 to N176. R183 is a binding site for 5-phospho-alpha-D-ribose 1-diphosphate. Positions 200 and 229 each coordinate GTP. Residue Y235 to T243 coordinates 5-phospho-alpha-D-ribose 1-diphosphate. T296–F298 provides a ligand contact to uracil.

This sequence belongs to the UPRTase family.

It is found in the cytoplasm. It localises to the nucleus. The chain is Uracil phosphoribosyltransferase homolog (UPRT) from Bos taurus (Bovine).